The following is a 524-amino-acid chain: Anthranilate synthase component 1 (524 aa).

L-tryptophan-binding positions include Ser55 and 297-299 (PYM). 332–333 (GT) provides a ligand contact to chorismate. Residue Glu359 participates in Mg(2+) binding. Residues Tyr447, Arg467, 485 to 487 (GAG), and Gly487 contribute to the chorismate site. A Mg(2+)-binding site is contributed by Glu500.

This sequence belongs to the anthranilate synthase component I family. As to quaternary structure, heterotetramer consisting of two non-identical subunits: a beta subunit (TrpG) and a large alpha subunit (TrpE). Mg(2+) is required as a cofactor.

The catalysed reaction is chorismate + L-glutamine = anthranilate + pyruvate + L-glutamate + H(+). It participates in amino-acid biosynthesis; L-tryptophan biosynthesis; L-tryptophan from chorismate: step 1/5. Its activity is regulated as follows. Feedback inhibited by tryptophan. Functionally, part of a heterotetrameric complex that catalyzes the two-step biosynthesis of anthranilate, an intermediate in the biosynthesis of L-tryptophan. In the first step, the glutamine-binding beta subunit (TrpG) of anthranilate synthase (AS) provides the glutamine amidotransferase activity which generates ammonia as a substrate that, along with chorismate, is used in the second step, catalyzed by the large alpha subunit of AS (TrpE) to produce anthranilate. In the absence of TrpG, TrpE can synthesize anthranilate directly from chorismate and high concentrations of ammonia. The protein is Anthranilate synthase component 1 (trpE) of Haloferax volcanii (strain ATCC 29605 / DSM 3757 / JCM 8879 / NBRC 14742 / NCIMB 2012 / VKM B-1768 / DS2) (Halobacterium volcanii).